The sequence spans 238 residues: Ribosomal RNA small subunit methyltransferase G (238 aa).

S-adenosyl-L-methionine is bound by residues glycine 106, leucine 111, 157-158, and arginine 170; that span reads IE.

The protein belongs to the methyltransferase superfamily. RNA methyltransferase RsmG family.

The protein resides in the cytoplasm. The catalysed reaction is guanosine(527) in 16S rRNA + S-adenosyl-L-methionine = N(7)-methylguanosine(527) in 16S rRNA + S-adenosyl-L-homocysteine. In terms of biological role, specifically methylates the N7 position of guanine in position 527 of 16S rRNA. The sequence is that of Ribosomal RNA small subunit methyltransferase G from Psychrobacter arcticus (strain DSM 17307 / VKM B-2377 / 273-4).